The following is a 117-amino-acid chain: U9-theraphotoxin-Hhn1a (117 aa).

The N-terminal stretch at 1-21 (MNTVRVTFLLVFVLAVSLGQA) is a signal peptide. Residues 22–75 (DEDGNRMEMRQEIEKTEADSSYFAENLLLQKLEELEAKLWEETSEESRNSRQKR) constitute a propeptide that is removed on maturation. 3 disulfides stabilise this stretch: Cys-76-Cys-94, Cys-83-Cys-99, and Cys-93-Cys-114.

It belongs to the neurotoxin 14 (magi-1) family. 01 (HNTX-16) subfamily. Expressed by the venom gland.

The protein resides in the secreted. In terms of biological role, probable ion channel inhibitor. In Cyriopagopus hainanus (Chinese bird spider), this protein is U9-theraphotoxin-Hhn1a.